Consider the following 382-residue polypeptide: S-adenosylmethionine synthase (382 aa).

ATP is bound at residue H14. D16 is a Mg(2+) binding site. Position 42 (E42) interacts with K(+). Residues E55 and Q91 each contribute to the L-methionine site. The flexible loop stretch occupies residues 91-101 (QSENIAMGVNL). Residues 156–158 (DMK), 222–223 (KF), D231, 237–238 (RK), A254, and K258 contribute to the ATP site. An L-methionine-binding site is contributed by D231. Residue K262 participates in L-methionine binding.

Belongs to the AdoMet synthase family. In terms of assembly, homotetramer; dimer of dimers. It depends on Mg(2+) as a cofactor. K(+) serves as cofactor.

Its subcellular location is the cytoplasm. The enzyme catalyses L-methionine + ATP + H2O = S-adenosyl-L-methionine + phosphate + diphosphate. Its pathway is amino-acid biosynthesis; S-adenosyl-L-methionine biosynthesis; S-adenosyl-L-methionine from L-methionine: step 1/1. Its function is as follows. Catalyzes the formation of S-adenosylmethionine (AdoMet) from methionine and ATP. The overall synthetic reaction is composed of two sequential steps, AdoMet formation and the subsequent tripolyphosphate hydrolysis which occurs prior to release of AdoMet from the enzyme. The chain is S-adenosylmethionine synthase from Mycoplasmopsis synoviae (strain 53) (Mycoplasma synoviae).